Reading from the N-terminus, the 1170-residue chain is DNA-directed RNA polymerase subunit beta' (1170 aa).

Zn(2+) contacts are provided by Cys-60, Cys-62, Cys-75, and Cys-78. Mg(2+) is bound by residues Asp-449, Asp-451, and Asp-453. Residues Cys-774, Cys-848, Cys-855, and Cys-858 each coordinate Zn(2+). Residues 1145–1170 (EPGEENGEPGGERLYGMDELYGETAN) form a disordered region.

The protein belongs to the RNA polymerase beta' chain family. As to quaternary structure, the RNAP catalytic core consists of 2 alpha, 1 beta, 1 beta' and 1 omega subunit. When a sigma factor is associated with the core the holoenzyme is formed, which can initiate transcription. Mg(2+) is required as a cofactor. Zn(2+) serves as cofactor.

It carries out the reaction RNA(n) + a ribonucleoside 5'-triphosphate = RNA(n+1) + diphosphate. Functionally, DNA-dependent RNA polymerase catalyzes the transcription of DNA into RNA using the four ribonucleoside triphosphates as substrates. The polypeptide is DNA-directed RNA polymerase subunit beta' (Pelotomaculum thermopropionicum (strain DSM 13744 / JCM 10971 / SI)).